The following is a 435-amino-acid chain: Acetylcholine receptor-like protein cup-4 (435 aa).

Positions methionine 1–alanine 24 are cleaved as a signal peptide. N-linked (GlcNAc...) asparagine glycosylation is found at asparagine 41, asparagine 68, asparagine 237, and asparagine 249. A run of 2 helical transmembrane segments spans residues valine 298–leucine 318 and isoleucine 341–leucine 361. Residue asparagine 403 is glycosylated (N-linked (GlcNAc...) asparagine). A helical transmembrane segment spans residues proline 413 to valine 433.

It belongs to the ligand-gated ion channel (TC 1.A.9) family. Acetylcholine receptor (TC 1.A.9.1) subfamily.

It is found in the cytoplasmic vesicle membrane. Thought to regulate endocytosis in coelomocytes through modulation of phospholipase C activity. Possible acetylcholine receptor. The chain is Acetylcholine receptor-like protein cup-4 from Caenorhabditis briggsae.